The following is a 235-amino-acid chain: Transcriptional regulatory protein WalR (235 aa).

The region spanning 4 to 117 is the Response regulatory domain; it reads KILVVDDEKP…ELLARVKANL (114 aa). D53 is modified (4-aspartylphosphate). The segment at residues 132–231 is a DNA-binding region (ompR/PhoB-type); sequence SNEIHIGSLV…RRGVGYYLRN (100 aa).

In terms of assembly, homodimer. Phosphorylated by WalK.

It localises to the cytoplasm. Functionally, member of the two-component regulatory system WalK/WalR involved in the regulation of the ftsAZ operon, the yocH, ykvT, cwlO, lytE, ydjM, yjeA, yoeB genes and the tagAB and tagDEF operons. Binds to the ftsAZ P1 promoter sequence in vitro. WalR has been shown to directly bind to the regulatory regions of yocH, ykvT, tagAB/tagDEF. Activates cwlO, lytE and ydjM and represses yoeB and yjeA. The protein is Transcriptional regulatory protein WalR of Bacillus subtilis (strain 168).